The primary structure comprises 954 residues: Mitogen-activated protein kinase kinase kinase 10 (954 aa).

The region spanning 16–81 is the SH3 domain; that stretch reads PAGPVWTAVF…PSNYVAPGAP (66 aa). One can recognise a Protein kinase domain in the interval 98 to 360; the sequence is LQLEEIIGVG…GSILKRLEVI (263 aa). Residues 104–112 and lysine 125 each bind ATP; that span reads IGVGGFGKV. Aspartate 222 acts as the Proton acceptor in catalysis. Phosphothreonine; by autocatalysis is present on threonine 258. Residue serine 262 is modified to Phosphoserine; by autocatalysis and MAP4K1. Leucine-zipper stretches follow at residues 384–405 and 419–440; these read IQHMFDDLRTKEKELRSREEEL and LRRREQELAEREMDIVERELHL. Disordered stretches follow at residues 490-665, 716-739, and 757-954; these read PTLD…RWGH, RFPRGLSPPARPHGRREDVGPGLG, and STRS…HGSH. Phosphoserine is present on residues serine 498, serine 502, and serine 506. Residues 501 to 511 show a composition bias toward low complexity; it reads ASPPASPSIIP. The residue at position 558 (threonine 558) is a Phosphothreonine. A compositionally biased stretch (basic and acidic residues) spans 566 to 578; that stretch reads QKERVGGEERLKG. The span at 611-620 shows a compositional bias: acidic residues; sequence EMEEFAEAED. Residues 631–640 are compositionally biased toward low complexity; sequence STPSYLSVPL. A compositionally biased stretch (pro residues) spans 773-790; the sequence is APSPPPSPPAPTPTPSPS. An Omega-N-methylarginine modification is found at arginine 857. The segment covering 913–927 has biased composition (pro residues); it reads PSRPDTPESPGPPSV.

Belongs to the protein kinase superfamily. STE Ser/Thr protein kinase family. MAP kinase kinase kinase subfamily. Homodimer. Interacts with SH3RF2. Requires Mg(2+) as cofactor. Post-translationally, autophosphorylation on serine and threonine residues within the activation loop plays a role in enzyme activation. In terms of tissue distribution, expressed in brain and skeletal muscle.

The catalysed reaction is L-seryl-[protein] + ATP = O-phospho-L-seryl-[protein] + ADP + H(+). It catalyses the reaction L-threonyl-[protein] + ATP = O-phospho-L-threonyl-[protein] + ADP + H(+). Homodimerization via the leucine zipper domains is required for autophosphorylation and subsequent activation. Functionally, activates the JUN N-terminal pathway. This is Mitogen-activated protein kinase kinase kinase 10 (MAP3K10) from Homo sapiens (Human).